A 246-amino-acid polypeptide reads, in one-letter code: Large ribosomal subunit protein uL2 (246 aa).

The segment at 197–227 (SPYAHPHGGGSHQKGGTPVPKTAPPGQKVGF) is disordered.

This sequence belongs to the universal ribosomal protein uL2 family. As to quaternary structure, part of the 50S ribosomal subunit. Forms a bridge to the 30S subunit in the 70S ribosome.

Its function is as follows. One of the primary rRNA binding proteins. Required for association of the 30S and 50S subunits to form the 70S ribosome, for tRNA binding and peptide bond formation. It has been suggested to have peptidyltransferase activity; this is somewhat controversial. Makes several contacts with the 16S rRNA in the 70S ribosome. This Pyrobaculum aerophilum (strain ATCC 51768 / DSM 7523 / JCM 9630 / CIP 104966 / NBRC 100827 / IM2) protein is Large ribosomal subunit protein uL2.